The sequence spans 419 residues: MDKLTIKASNPLAGEVVISGAKNAALPILMAGVLAETDFIVSNVPSLRDVITSCELLRCLGAEVEDLGGSRIRISTTNLNEYCAPYDLVKTMRASILILGPLLARYGTADVSLPGGCAIGARPVNLHLHGLELMGAKIEVKEGYIKARVDGRLKGTHIFMDMVSVGATENLLMAAALADGTTVIENAAREPEVTDLAHCLIAMGAKITGIGTATLKIEGVERLSGCEYRVMPDRIETGSFLVAAAVTRGKIRCVSADPSALEAVLSKLEDAGAEITTGEDWIELDMKGQRPKSVNIKTAPYPAFPTDMQAQFCVLNALAEGTGRVTETIFENRFMHVPELIRMGADIEQEGNTCIIHGIDRLNGAQVMATDLRASASLVIAGLMAEGTTTVDRIYHLDRGYEHIEAKFQGLGAEVVRVK.

22–23 contributes to the phosphoenolpyruvate binding site; that stretch reads KN. Arg-93 serves as a coordination point for UDP-N-acetyl-alpha-D-glucosamine. Cys-117 acts as the Proton donor in catalysis. Cys-117 bears the 2-(S-cysteinyl)pyruvic acid O-phosphothioketal mark. UDP-N-acetyl-alpha-D-glucosamine is bound by residues Asp-307 and Ile-329.

Belongs to the EPSP synthase family. MurA subfamily.

Its subcellular location is the cytoplasm. It carries out the reaction phosphoenolpyruvate + UDP-N-acetyl-alpha-D-glucosamine = UDP-N-acetyl-3-O-(1-carboxyvinyl)-alpha-D-glucosamine + phosphate. It participates in cell wall biogenesis; peptidoglycan biosynthesis. In terms of biological role, cell wall formation. Adds enolpyruvyl to UDP-N-acetylglucosamine. The sequence is that of UDP-N-acetylglucosamine 1-carboxyvinyltransferase from Shewanella frigidimarina (strain NCIMB 400).